The chain runs to 514 residues: Pantothenate transporter liz1 (514 aa).

A run of 12 helical transmembrane segments spans residues 24 to 44 (LLIKIDWFILSYCCVSYFINY), 72 to 92 (INVVFTCGYIIGQLPGSYALQ), 98 to 118 (LWFSVMNILWGLMTIFSFAVH), 128 to 148 (FFMAVAEASTFAGTHYILGAW), 159 to 179 (GIFSASGLVGTMFAGYLQTAV), 194 to 214 (WLFIIDGILTIPLSLYGLFLF), 263 to 283 (GLCILWIFSGETQAIAVNVLM), 300 to 320 (NYPTVITAVGVVSTLGASVIS), 329 to 349 (WPFGLFLCVITTVSATILLAW), 357 to 377 (FFAYFASGCTYAGQAVWFSWA), 390 to 410 (VVVFLMNMCQNIWHIWWAPIM), and 423 to 443 (LIGLLVVGGIVFVSSCIVSYM).

This sequence belongs to the major facilitator superfamily. Allantoate permease family.

It is found in the cell membrane. Its function is as follows. Transports pantothenate into the cell. This Schizosaccharomyces pombe (strain 972 / ATCC 24843) (Fission yeast) protein is Pantothenate transporter liz1 (liz1).